A 466-amino-acid chain; its full sequence is Asparagine--tRNA ligase (466 aa).

Belongs to the class-II aminoacyl-tRNA synthetase family. In terms of assembly, homodimer.

It localises to the cytoplasm. The catalysed reaction is tRNA(Asn) + L-asparagine + ATP = L-asparaginyl-tRNA(Asn) + AMP + diphosphate + H(+). The polypeptide is Asparagine--tRNA ligase (Shigella dysenteriae serotype 1 (strain Sd197)).